Consider the following 426-residue polypeptide: Protein prenyltransferase alpha subunit repeat-containing protein 1 (426 aa).

4 PFTA repeats span residues Ala-86–Pro-119, Lys-121–Cys-154, Glu-180–Asn-213, and Asp-219–Leu-252. The tract at residues Ala-255 to His-279 is disordered. The span at Thr-262–Ser-275 shows a compositional bias: polar residues. Residues Glu-290 to Arg-323 form a PFTA 5 repeat.

This sequence belongs to the protein prenyltransferase subunit alpha family.

The polypeptide is Protein prenyltransferase alpha subunit repeat-containing protein 1 (ptar1) (Danio rerio (Zebrafish)).